A 340-amino-acid chain; its full sequence is MNLTGKKVILHDMSLRDGMHARQHQISLKEMVDVATGLDAAGVPLIEVTHGDGLGGASLNYGFPAHTDEEYLSAVIPKMKQAKVSALLLPGIGTGDHLRMAHDLGVNTIRVATHCTEADVSGQHISLSRELGLDTVGFLMMAHMVSPDKLLEQAKLMESYGANCIYCTDSAGYMLPGDVTSHIERLRGELKSDTQIGFHGHHNMGMSIANSLAAIQAGAERIDGSVAGLGAGAGNTPLEVFVAVLERMQVSHGINLYDIMDVAEDLVTPMMDQPIRIDRDALTLGYAGVYSSFLLFAQRAEKKHGIPARDILLELGRRGTVGGQEDMIDDTAMNMARERA.

The Pyruvate carboxyltransferase domain maps to 8–260 (VILHDMSLRD…SHGINLYDIM (253 aa)). 16–17 (RD) is a binding site for substrate. Asp-17 contacts Mn(2+). His-20 (proton acceptor) is an active-site residue. Ser-170 and His-199 together coordinate substrate. Mn(2+)-binding residues include His-199 and His-201. Tyr-290 lines the substrate pocket.

Belongs to the 4-hydroxy-2-oxovalerate aldolase family.

The enzyme catalyses (S)-4-hydroxy-2-oxopentanoate = acetaldehyde + pyruvate. In Shewanella pealeana (strain ATCC 700345 / ANG-SQ1), this protein is 4-hydroxy-2-oxovalerate aldolase.